The sequence spans 541 residues: Chaperonin GroEL 2 (541 aa).

ATP-binding positions include 29–32 (TLGP) and 86–90 (DGTTT). Residue Lys-132 forms an Isoglutamyl lysine isopeptide (Lys-Gln) (interchain with Q-Cter in protein Pup) linkage. ATP-binding positions include Gly-413, 476 to 478 (NAA), and Asp-492.

The protein belongs to the chaperonin (HSP60) family. As to quaternary structure, forms a cylinder of 14 subunits composed of two heptameric rings stacked back-to-back. Interacts with the co-chaperonin GroES.

It localises to the secreted. The protein resides in the capsule. It is found in the cell surface. Its subcellular location is the cell wall. The catalysed reaction is ATP + H2O + a folded polypeptide = ADP + phosphate + an unfolded polypeptide.. In terms of biological role, together with its co-chaperonin GroES, plays an essential role in assisting protein folding. The GroEL-GroES system forms a nano-cage that allows encapsulation of the non-native substrate proteins and provides a physical environment optimized to promote and accelerate protein folding. The polypeptide is Chaperonin GroEL 2 (Mycolicibacterium smegmatis (strain ATCC 700084 / mc(2)155) (Mycobacterium smegmatis)).